The following is a 90-amino-acid chain: Acylphosphatase (90 aa).

Residues 3–90 (QKLFIVTGHV…EQFEHFEIRR (88 aa)) enclose the Acylphosphatase-like domain. Active-site residues include arginine 18 and asparagine 36.

This sequence belongs to the acylphosphatase family.

The catalysed reaction is an acyl phosphate + H2O = a carboxylate + phosphate + H(+). The protein is Acylphosphatase (acyP) of Actinobacillus pleuropneumoniae serotype 5b (strain L20).